A 499-amino-acid polypeptide reads, in one-letter code: Ammonium transporter MEP2 (499 aa).

Residues Met1–Asn31 are Extracellular-facing. An N-linked (GlcNAc...) asparagine glycan is attached at Asn4. The helical transmembrane segment at Met32–Leu52 threads the bilayer. The Cytoplasmic portion of the chain corresponds to Tyr53–Ala62. The chain crosses the membrane as a helical span at residues Leu63–Trp83. Residues Gly84–Asp122 lie on the Extracellular side of the membrane. The chain crosses the membrane as a helical span at residues Ile123–Gly143. Over Ala144–Pro152 the chain is Cytoplasmic. The helical transmembrane segment at Met153–Trp173 threads the bilayer. Over Asn174–Tyr187 the chain is Extracellular. Residues Ala188–Leu208 form a helical membrane-spanning segment. Residues Gly209 to Ser230 are Cytoplasmic-facing. Residues Val231–Gly251 traverse the membrane as a helical segment. Residues Asn252–Ala257 lie on the Extracellular side of the membrane. A helical membrane pass occupies residues Trp258–Ile278. Over Asp279–Thr289 the chain is Cytoplasmic. The chain crosses the membrane as a helical span at residues Val290–Ile312. At Trp313–Ala315 the chain is on the extracellular side. The chain crosses the membrane as a helical span at residues Val316–Ile338. Topologically, residues Asp339–Ser346 are cytoplasmic. A helical membrane pass occupies residues Ile347–Val367. Over Asn368–Gln393 the chain is Extracellular. A helical membrane pass occupies residues Leu394 to Thr414. Residues Met415–Val499 are Cytoplasmic-facing. Residues Asp428–Glu441 are enhancer domain. Positions Phe442–Ala449 are linker domain. Residues Tyr450–Thr485 are autoinhibitory domain. The tract at residues Ile455–Val499 is disordered. Phosphoserine is present on Ser457. Over residues Glu468–Lys482 the composition is skewed to basic and acidic residues. Over residues Asn483–Lys493 the composition is skewed to polar residues.

This sequence belongs to the ammonia transporter channel (TC 1.A.11.2) family. In terms of processing, phosphorylated at Ser-457 by the TORC1 effector kinase NPR1 under nitrogen-limiting conditions which causes a conformational change in the C-terminal region (CTR) to form an open active conformation. Supplementation of nitrogen source leads to inactivation and instant Ser-457 dephosphorylation via plasma membrane PSR1 and PSR2 redundant phosphatases. The residue Asn-4 of the protein's N-terminal tail is the only site that is glycosylated.

Its subcellular location is the cell membrane. Transporter for ammonium (both charged and uncharged NH3 and NH4) to use as a nitrogen source. The affinity of MEP2 is about twenty times higher than that of MEP1. MEP3 has the lowest affinity. Under ammonium limitation acts as an ammonium sensor, generating a signal that leads to pseudohyphal (filamentous) growth. The chain is Ammonium transporter MEP2 from Saccharomyces cerevisiae (strain ATCC 204508 / S288c) (Baker's yeast).